The sequence spans 185 residues: UPF0397 protein LJ_1703 (185 aa).

Helical transmembrane passes span Gly-6–Ala-26, Phe-46–Gly-66, Thr-78–Met-98, Ile-113–Val-133, and Phe-147–Ile-167.

The protein belongs to the UPF0397 family.

It is found in the cell membrane. This chain is UPF0397 protein LJ_1703, found in Lactobacillus johnsonii (strain CNCM I-12250 / La1 / NCC 533).